Reading from the N-terminus, the 359-residue chain is Phospho-N-acetylmuramoyl-pentapeptide-transferase (359 aa).

Transmembrane regions (helical) follow at residues 3–23, 55–75, 80–100, 117–137, 156–176, 187–207, 231–251, 255–275, 280–300, and 334–354; these read LILIAVGIALAVSILLTPALI, VAILAGIWAGYLGSHLVGMAM, PSASGLLVLGLATVLGGVGFI, TAKTVGQLFAAVLFGVLALQF, IATVTLAPALFVLFCVVVVSA, LDGLAAGAMAMVTAAYVLITF, LALVAAATAGACVGFLWWNAA, IFMGDTGSLALGGIIAGISVT, ILAVVLGALFVAEVTSVVVQI, and FWLLTAIACGLGVALFYGEWL.

This sequence belongs to the glycosyltransferase 4 family. MraY subfamily. The cofactor is Mg(2+).

The protein localises to the cell membrane. The enzyme catalyses UDP-N-acetyl-alpha-D-muramoyl-L-alanyl-gamma-D-glutamyl-meso-2,6-diaminopimeloyl-D-alanyl-D-alanine + di-trans,octa-cis-undecaprenyl phosphate = di-trans,octa-cis-undecaprenyl diphospho-N-acetyl-alpha-D-muramoyl-L-alanyl-D-glutamyl-meso-2,6-diaminopimeloyl-D-alanyl-D-alanine + UMP. The protein operates within cell wall biogenesis; peptidoglycan biosynthesis. Functionally, catalyzes the initial step of the lipid cycle reactions in the biosynthesis of the cell wall peptidoglycan: transfers peptidoglycan precursor phospho-MurNAc-pentapeptide from UDP-MurNAc-pentapeptide onto the lipid carrier undecaprenyl phosphate, yielding undecaprenyl-pyrophosphoryl-MurNAc-pentapeptide, known as lipid I. The sequence is that of Phospho-N-acetylmuramoyl-pentapeptide-transferase from Mycolicibacterium smegmatis (strain ATCC 700084 / mc(2)155) (Mycobacterium smegmatis).